A 163-amino-acid chain; its full sequence is uncharacterized protein (163 aa).

The chain crosses the membrane as a helical span at residues 11–31; sequence LSWFLLLVVVILIFFLLLSCL.

Its subcellular location is the membrane. This is an uncharacterized protein from Saccharomyces cerevisiae (strain ATCC 204508 / S288c) (Baker's yeast).